The following is a 344-amino-acid chain: L-threonine 3-dehydrogenase (344 aa).

Cysteine 38 lines the Zn(2+) pocket. Residues threonine 40 and histidine 43 each act as charge relay system in the active site. Zn(2+) contacts are provided by histidine 63, glutamate 64, cysteine 93, cysteine 96, cysteine 99, and cysteine 107. Residues isoleucine 175, aspartate 195, arginine 200, 263–265 (LGI), and 287–288 (IY) each bind NAD(+).

The protein belongs to the zinc-containing alcohol dehydrogenase family. As to quaternary structure, homotetramer. It depends on Zn(2+) as a cofactor.

It localises to the cytoplasm. It catalyses the reaction L-threonine + NAD(+) = (2S)-2-amino-3-oxobutanoate + NADH + H(+). Its pathway is amino-acid degradation; L-threonine degradation via oxydo-reductase pathway; glycine from L-threonine: step 1/2. Catalyzes the NAD(+)-dependent oxidation of L-threonine to 2-amino-3-ketobutyrate. This is L-threonine 3-dehydrogenase from Deinococcus deserti (strain DSM 17065 / CIP 109153 / LMG 22923 / VCD115).